The following is a 272-amino-acid chain: Phosphate import ATP-binding protein PstB 1 (272 aa).

The ABC transporter domain occupies 26–267 (LEIRNLDLRY…PKKRKTEDYI (242 aa)). Residue 58-65 (GPSGCGKS) coordinates ATP.

Belongs to the ABC transporter superfamily. Phosphate importer (TC 3.A.1.7) family. The complex is composed of two ATP-binding proteins (PstB), two transmembrane proteins (PstC and PstA) and a solute-binding protein (PstS).

It localises to the cell inner membrane. It catalyses the reaction phosphate(out) + ATP + H2O = ADP + 2 phosphate(in) + H(+). Part of the ABC transporter complex PstSACB involved in phosphate import. Responsible for energy coupling to the transport system. The protein is Phosphate import ATP-binding protein PstB 1 of Shewanella oneidensis (strain ATCC 700550 / JCM 31522 / CIP 106686 / LMG 19005 / NCIMB 14063 / MR-1).